The sequence spans 175 residues: Albumin-1 (175 aa).

The cysteines at positions 135 and 141 are disulfide-linked.

It belongs to the protease inhibitor I3 (leguminous Kunitz-type inhibitor) family.

Functionally, 2S seed storage protein. The polypeptide is Albumin-1 (Psophocarpus tetragonolobus (Winged bean)).